Reading from the N-terminus, the 388-residue chain is Succinate--CoA ligase [ADP-forming] subunit beta (388 aa).

Residues 9–245 enclose the ATP-grasp domain; that stretch reads KELLAKYGLP…KSQENERELK (237 aa). Residues lysine 46, 53 to 55, glutamate 100, tyrosine 103, and glutamate 108 contribute to the ATP site; that span reads GRG. Mg(2+) contacts are provided by asparagine 200 and aspartate 214. Substrate contacts are provided by residues asparagine 265 and 322–324; that span reads GIV.

Belongs to the succinate/malate CoA ligase beta subunit family. As to quaternary structure, heterotetramer of two alpha and two beta subunits. Requires Mg(2+) as cofactor.

It carries out the reaction succinate + ATP + CoA = succinyl-CoA + ADP + phosphate. The enzyme catalyses GTP + succinate + CoA = succinyl-CoA + GDP + phosphate. It participates in carbohydrate metabolism; tricarboxylic acid cycle; succinate from succinyl-CoA (ligase route): step 1/1. Its function is as follows. Succinyl-CoA synthetase functions in the citric acid cycle (TCA), coupling the hydrolysis of succinyl-CoA to the synthesis of either ATP or GTP and thus represents the only step of substrate-level phosphorylation in the TCA. The beta subunit provides nucleotide specificity of the enzyme and binds the substrate succinate, while the binding sites for coenzyme A and phosphate are found in the alpha subunit. The polypeptide is Succinate--CoA ligase [ADP-forming] subunit beta (Laribacter hongkongensis (strain HLHK9)).